The primary structure comprises 291 residues: Diaminopimelate epimerase (291 aa).

Substrate-binding residues include N13, Q46, and N66. C75 functions as the Proton donor in the catalytic mechanism. Substrate contacts are provided by residues 76–77 (GN), N170, N203, and 221–222 (ER). The Proton acceptor role is filled by C230. 231 to 232 (GS) contacts substrate.

Belongs to the diaminopimelate epimerase family. As to quaternary structure, homodimer.

Its subcellular location is the cytoplasm. It carries out the reaction (2S,6S)-2,6-diaminopimelate = meso-2,6-diaminopimelate. The protein operates within amino-acid biosynthesis; L-lysine biosynthesis via DAP pathway; DL-2,6-diaminopimelate from LL-2,6-diaminopimelate: step 1/1. Functionally, catalyzes the stereoinversion of LL-2,6-diaminopimelate (L,L-DAP) to meso-diaminopimelate (meso-DAP), a precursor of L-lysine and an essential component of the bacterial peptidoglycan. The chain is Diaminopimelate epimerase from Albidiferax ferrireducens (strain ATCC BAA-621 / DSM 15236 / T118) (Rhodoferax ferrireducens).